Here is a 506-residue protein sequence, read N- to C-terminus: Mitogen-activated protein kinase 13 (506 aa).

The Protein kinase domain occupies 13–304 (YQIQEVVGKG…AEEALADPYF (292 aa)). Residues 19-27 (VGKGSYGVV) and Lys-42 contribute to the ATP site. The active-site Proton acceptor is the Asp-139. Thr-175 bears the Phosphothreonine mark. Positions 175-177 (TDY) match the TXY motif. Position 177 is a phosphotyrosine (Tyr-177). The interval 384–421 (YSRGERSTPLRRQHASLPRERVCSSVDSNNQDSDNEER) is disordered.

Belongs to the protein kinase superfamily. CMGC Ser/Thr protein kinase family. MAP kinase subfamily. Post-translationally, dually phosphorylated on Thr-175 and Tyr-177, which activates the enzyme.

The enzyme catalyses L-seryl-[protein] + ATP = O-phospho-L-seryl-[protein] + ADP + H(+). It catalyses the reaction L-threonyl-[protein] + ATP = O-phospho-L-threonyl-[protein] + ADP + H(+). With respect to regulation, activated by threonine and tyrosine phosphorylation. The polypeptide is Mitogen-activated protein kinase 13 (MPK13) (Oryza sativa subsp. indica (Rice)).